We begin with the raw amino-acid sequence, 358 residues long: uncharacterized protein (358 aa).

The interval 1–47 (MGNVAGETRANVIPLHTNRSRVAARRRAGQRAESRQHPSLLSDPNDR) is disordered. Residues 18 to 29 (NRSRVAARRRAG) are compositionally biased toward basic residues.

To M.leprae ML2427.

This is an uncharacterized protein from Mycobacterium tuberculosis (strain CDC 1551 / Oshkosh).